Consider the following 316-residue polypeptide: MSEQFQHVSVLLHESIDGLAIKPDGIYIDGTFGRGGHSRQILSRLGENGRLYSIDRDPQAIAEAKTITDPRFNIIHGPFSGLKGYVEELGLVGQIDGVLLDLGVSSPQLDDADRGFSFMKDGPLDMRMDPTSGMPVSQWLLTADVEDITWVIREFGEDKHAWRIAKGIVAYRDNEENEPLTRTGQLAKLISDVAPKNFKEKKHPATRTFQAFRIYINSELDEIDTALNGALDVFAEGGRLSVISFHSLEDRMVKHFIRKESRGPQVPHGIPLTENQIKALGSAKMKPIGKAIKPTVNEVDVNVRSRSSVLRIAERL.

Residues 35–37, Asp55, Phe79, Asp101, and Gln108 each bind S-adenosyl-L-methionine; that span reads GGH.

The protein belongs to the methyltransferase superfamily. RsmH family.

The protein resides in the cytoplasm. The catalysed reaction is cytidine(1402) in 16S rRNA + S-adenosyl-L-methionine = N(4)-methylcytidine(1402) in 16S rRNA + S-adenosyl-L-homocysteine + H(+). In terms of biological role, specifically methylates the N4 position of cytidine in position 1402 (C1402) of 16S rRNA. This chain is Ribosomal RNA small subunit methyltransferase H, found in Aliivibrio salmonicida (strain LFI1238) (Vibrio salmonicida (strain LFI1238)).